The sequence spans 802 residues: LPS-assembly protein LptD (802 aa).

The signal sequence occupies residues 1 to 25 (MARLFSLKPLVLALGLCFGTHCAAA).

Belongs to the LptD family. As to quaternary structure, component of the lipopolysaccharide transport and assembly complex. Interacts with LptE and LptA.

The protein resides in the cell outer membrane. Functionally, together with LptE, is involved in the assembly of lipopolysaccharide (LPS) at the surface of the outer membrane. The sequence is that of LPS-assembly protein LptD from Neisseria meningitidis serogroup B (strain ATCC BAA-335 / MC58).